A 308-amino-acid chain; its full sequence is MSVGVAVLGSGNIGTDLMIKVLRLSDSLRMVAMAGIDSGSDGLARARRLGVTTTADGVAGLVTLPEFADVELVFDATSAGAHRHHDSVLRAYGRIVVDLTPAAIGPYVVPPVNLDEHLAETNVNMVTCGGQATVPIVAAIGRVTPVAYGEIVASIASKSAGPGTRANIDEFTETTARAIEVVGGADRGKAIIVLNPADPPLLMRDTVYCLCPDTDADRSAIIAAVTDMVGAVQEYVPGYRLKQEVQFDRVDSYLPALGGHLTGLQVSVFLEVSGAGHYLPEYAGNLDIMTSAALRTAERLIGRRAVTA.

10 to 13 is a binding site for NAD(+); the sequence is SGNI. C128 (acyl-thioester intermediate) is an active-site residue. Residues 159–167 and N285 contribute to the NAD(+) site; that span reads SAGPGTRAN.

The protein belongs to the acetaldehyde dehydrogenase family.

It catalyses the reaction acetaldehyde + NAD(+) + CoA = acetyl-CoA + NADH + H(+). This Salinispora arenicola (strain CNS-205) protein is Acetaldehyde dehydrogenase 1.